The chain runs to 89 residues: Gamma-bungarotoxin (89 aa).

An N-terminal signal peptide occupies residues 1-21; it reads MKTLLLTLVVVTIVCLDLGYT. 5 disulfide bridges follow: C24–C45, C27–C32, C38–C66, C70–C81, and C82–C87. The Cell attachment site signature appears at 54–56; sequence RGD.

The protein belongs to the three-finger toxin family. Ancestral subfamily. Orphan group V sub-subfamily. As to expression, expressed by the venom gland.

The protein localises to the secreted. Functionally, exhibits M2 muscarinic acetylcholine receptor (CHRM2)-blocking activity, but has a weak binding activity toward nicotinic AChR. Moreover, it inhibits collagen-induced platelet aggregation. In Bungarus multicinctus (Many-banded krait), this protein is Gamma-bungarotoxin.